The following is a 102-amino-acid chain: Small ribosomal subunit protein uS10 (102 aa).

This sequence belongs to the universal ribosomal protein uS10 family. In terms of assembly, part of the 30S ribosomal subunit.

In terms of biological role, involved in the binding of tRNA to the ribosomes. This Paracoccus denitrificans (strain Pd 1222) protein is Small ribosomal subunit protein uS10.